We begin with the raw amino-acid sequence, 567 residues long: Membrane protein insertase YidC (567 aa).

A helical transmembrane segment spans residues 3–23; the sequence is IQRIVLFAGLAIVSYLMVLAW. Residues 32-80 are disordered; it reads TEQVAEAQSSSDSSATNSTDDMILPEDNNAGGEEFATPETGSLASTSAN. The segment covering 40–52 has biased composition (low complexity); it reads SSSDSSATNSTDD. Over residues 70 to 80 the composition is skewed to polar residues; that stretch reads ETGSLASTSAN. 5 helical membrane passes run 354 to 374, 378 to 398, 445 to 465, 485 to 505, and 522 to 542; these read FGWLFFISLPLFYILEWFYGL, WGVAIILLTVLVKAVFFHLSA, GGCLPILVQMPVFISLYWVLF, MDPYFILPILMGASMFIQMSL, and PLIFTVFFLWFPAGLVLYWLV.

The protein belongs to the OXA1/ALB3/YidC family. Type 1 subfamily. In terms of assembly, interacts with the Sec translocase complex via SecD. Specifically interacts with transmembrane segments of nascent integral membrane proteins during membrane integration.

It is found in the cell inner membrane. In terms of biological role, required for the insertion and/or proper folding and/or complex formation of integral membrane proteins into the membrane. Involved in integration of membrane proteins that insert both dependently and independently of the Sec translocase complex, as well as at least some lipoproteins. Aids folding of multispanning membrane proteins. This is Membrane protein insertase YidC from Marinobacter nauticus (strain ATCC 700491 / DSM 11845 / VT8) (Marinobacter aquaeolei).